Here is a 1056-residue protein sequence, read N- to C-terminus: Sucrose-phosphate synthase (1056 aa).

Basic and acidic residues predominate over residues 112–123 (HVERERGRREAT). The interval 112–132 (HVERERGRREATADMSEDLSE) is disordered. A phosphoserine mark is found at Ser-158 and Ser-424. Residues 681 to 700 (NWQRIDEGSENSDTDSAGDS) are disordered.

Belongs to the glycosyltransferase 1 family. As to quaternary structure, homodimer or homotetramer. Phosphorylated at Ser-158 and Ser-424.

The enzyme catalyses beta-D-fructose 6-phosphate + UDP-alpha-D-glucose = sucrose 6(F)-phosphate + UDP + H(+). Its pathway is glycan biosynthesis; sucrose biosynthesis; sucrose from D-fructose 6-phosphate and UDP-alpha-D-glucose: step 1/2. With respect to regulation, activity is regulated by phosphorylation and moderated by concentration of metabolites and light. Its function is as follows. Plays a role in photosynthetic sucrose synthesis by catalyzing the rate-limiting step of sucrose biosynthesis from UDP-glucose and fructose- 6-phosphate. Involved in the regulation of carbon partitioning in the leaves of plants. May regulate the synthesis of sucrose and therefore play a major role as a limiting factor in the export of photoassimilates out of the leaf. Plays a role for sucrose availability that is essential for plant growth and fiber elongation. The polypeptide is Sucrose-phosphate synthase (SPS1) (Spinacia oleracea (Spinach)).